The following is a 37-amino-acid chain: Large ribosomal subunit protein bL36 (37 aa).

It belongs to the bacterial ribosomal protein bL36 family.

This Mycobacterium ulcerans (strain Agy99) protein is Large ribosomal subunit protein bL36.